A 103-amino-acid chain; its full sequence is Co-chaperonin GroES (103 aa).

It belongs to the GroES chaperonin family. In terms of assembly, heptamer of 7 subunits arranged in a ring. Interacts with the chaperonin GroEL.

The protein resides in the cytoplasm. In terms of biological role, together with the chaperonin GroEL, plays an essential role in assisting protein folding. The GroEL-GroES system forms a nano-cage that allows encapsulation of the non-native substrate proteins and provides a physical environment optimized to promote and accelerate protein folding. GroES binds to the apical surface of the GroEL ring, thereby capping the opening of the GroEL channel. The sequence is that of Co-chaperonin GroES from Prochlorococcus marinus (strain MIT 9211).